The primary structure comprises 1357 residues: DNA-directed RNA polymerase subunit beta (1357 aa).

Belongs to the RNA polymerase beta chain family. As to quaternary structure, the RNAP catalytic core consists of 2 alpha, 1 beta, 1 beta' and 1 omega subunit. When a sigma factor is associated with the core the holoenzyme is formed, which can initiate transcription.

The catalysed reaction is RNA(n) + a ribonucleoside 5'-triphosphate = RNA(n+1) + diphosphate. In terms of biological role, DNA-dependent RNA polymerase catalyzes the transcription of DNA into RNA using the four ribonucleoside triphosphates as substrates. The polypeptide is DNA-directed RNA polymerase subunit beta (Neorickettsia sennetsu (Ehrlichia sennetsu)).